Reading from the N-terminus, the 289-residue chain is Energy-coupling factor transporter ATP-binding protein EcfA2 (289 aa).

An ABC transporter domain is found at 7–251 (IILDNVSYTY…IELLTKIEID (245 aa)). Residue 44-51 (GTTGSGKS) coordinates ATP.

Belongs to the ABC transporter superfamily. Energy-coupling factor EcfA family. In terms of assembly, forms a stable energy-coupling factor (ECF) transporter complex composed of 2 membrane-embedded substrate-binding proteins (S component), 2 ATP-binding proteins (A component) and 2 transmembrane proteins (T component).

Its subcellular location is the cell membrane. In terms of biological role, ATP-binding (A) component of a common energy-coupling factor (ECF) ABC-transporter complex. Unlike classic ABC transporters this ECF transporter provides the energy necessary to transport a number of different substrates. This is Energy-coupling factor transporter ATP-binding protein EcfA2 from Mycoplasma capricolum subsp. capricolum (strain California kid / ATCC 27343 / NCTC 10154).